We begin with the raw amino-acid sequence, 875 residues long: MNCRPLEKYDPKAFEDEIYTKWLKNNVFLPDNSLFEKFSMVAPPPNVTGVLHMGHALNFVLQDVLVRYKRMKRHNTLWLFGTDHAGIATQAVFERHLKKIGKSKDDFEREELVQEIFKLKDRHRGIIVNQINKLGASYDHSRERFTLDENLCKAVNKVFKDLYFKGLIYRGEYLVNLDPGSGSVVSDEEIEYKEVDGKLYFVKYFIDNSSFIEVATTRPETMFGDTAIAVNPNDERYKSLVGKEVTIPLTTKKIKVIADFYVDSAFGTGALKVTPAHDPNDFEISKRHNISKVNILTQDGKLNKNVPLQYQGLSAKDARFKIETELMEKGFLQDVKKHKQQVGHCYRSGEVIEPYLSTQWFVRMKPLADKALKALENGELKFYPKKWENTYKYWLSNIRDWCISRQLVWGHRIPVWYNVDTSELIVSDTDPSLDEKNMGKRFVQDPDVLDTWFSSWLWPFSSLGWPNVDVDFKNYYPTNTLITAYDIIFFWVARMVMAGLEFTGQVPFKDVYITPLLRDKQGKKMSKSLGNGIDPLDIINEYGSDSLRFTLSFLSVQGQDLNIDAKDFMFGAKFANKVFNASKFILLNLKNRKILNDLKFNDIDKWLLTSLNSTILGVESSFANYKYNEASKFVYEFFWNDFCDWYIEISKIDLNNENVDIQNMAISKLLFFLKKSLLILHPFIPFVTEKIYSEFAEKEDILALNEYPNFDIANNFQEEFEIFKVLKTFIIAIRTLKSEFNIPASVEIDVALKFDADFKYEAYFKANESIVKRMINFKNIFYNENYDGMLGVAAVGFEIYADVKSLIDKTKELIRLEKQLEKYKMLNISVSKKLENENFLMNAPKEIVESEKLKFVEFSSLINKINNYIINLKNL.

Positions 45–55 match the 'HIGH' region motif; it reads PNVTGVLHMGH. A 'KMSKS' region motif is present at residues 524–528; sequence KMSKS. K527 is an ATP binding site. Positions 803–837 form a coiled coil; that stretch reads VKSLIDKTKELIRLEKQLEKYKMLNISVSKKLENE.

The protein belongs to the class-I aminoacyl-tRNA synthetase family. ValS type 1 subfamily. Monomer.

It is found in the cytoplasm. It catalyses the reaction tRNA(Val) + L-valine + ATP = L-valyl-tRNA(Val) + AMP + diphosphate. In terms of biological role, catalyzes the attachment of valine to tRNA(Val). As ValRS can inadvertently accommodate and process structurally similar amino acids such as threonine, to avoid such errors, it has a 'posttransfer' editing activity that hydrolyzes mischarged Thr-tRNA(Val) in a tRNA-dependent manner. This Borreliella burgdorferi (strain ATCC 35210 / DSM 4680 / CIP 102532 / B31) (Borrelia burgdorferi) protein is Valine--tRNA ligase.